Here is a 422-residue protein sequence, read N- to C-terminus: Serine--tRNA ligase (422 aa).

229–231 provides a ligand contact to L-serine; that stretch reads TAE. 260 to 262 provides a ligand contact to ATP; sequence RAE. Glu-283 lines the L-serine pocket. 347-350 provides a ligand contact to ATP; it reads EISS. Ser-383 contributes to the L-serine binding site.

Belongs to the class-II aminoacyl-tRNA synthetase family. Type-1 seryl-tRNA synthetase subfamily. Homodimer. The tRNA molecule binds across the dimer.

It is found in the cytoplasm. The catalysed reaction is tRNA(Ser) + L-serine + ATP = L-seryl-tRNA(Ser) + AMP + diphosphate + H(+). The enzyme catalyses tRNA(Sec) + L-serine + ATP = L-seryl-tRNA(Sec) + AMP + diphosphate + H(+). It functions in the pathway aminoacyl-tRNA biosynthesis; selenocysteinyl-tRNA(Sec) biosynthesis; L-seryl-tRNA(Sec) from L-serine and tRNA(Sec): step 1/1. In terms of biological role, catalyzes the attachment of serine to tRNA(Ser). Is also able to aminoacylate tRNA(Sec) with serine, to form the misacylated tRNA L-seryl-tRNA(Sec), which will be further converted into selenocysteinyl-tRNA(Sec). The chain is Serine--tRNA ligase from Halothermothrix orenii (strain H 168 / OCM 544 / DSM 9562).